Here is a 389-residue protein sequence, read N- to C-terminus: Succinate--CoA ligase [ADP-forming] subunit beta (389 aa).

ATP is bound by residues Lys46, Gly53–Gly55, Glu99, Cys102, and Glu107. 2 residues coordinate Mg(2+): Asn199 and Asp213. Substrate-binding positions include Asn264 and Gly321 to Val323.

It belongs to the succinate/malate CoA ligase beta subunit family. Heterotetramer of two alpha and two beta subunits. Mg(2+) serves as cofactor.

The enzyme catalyses succinate + ATP + CoA = succinyl-CoA + ADP + phosphate. It catalyses the reaction GTP + succinate + CoA = succinyl-CoA + GDP + phosphate. Its pathway is carbohydrate metabolism; tricarboxylic acid cycle; succinate from succinyl-CoA (ligase route): step 1/1. In terms of biological role, succinyl-CoA synthetase functions in the citric acid cycle (TCA), coupling the hydrolysis of succinyl-CoA to the synthesis of either ATP or GTP and thus represents the only step of substrate-level phosphorylation in the TCA. The beta subunit provides nucleotide specificity of the enzyme and binds the substrate succinate, while the binding sites for coenzyme A and phosphate are found in the alpha subunit. This Haemophilus influenzae (strain 86-028NP) protein is Succinate--CoA ligase [ADP-forming] subunit beta.